We begin with the raw amino-acid sequence, 434 residues long: 3-ketoacyl-CoA thiolase A, peroxisomal (434 aa).

The N-terminal 36 residues, 1-36 (MSESVGRTSAMHRLQVVLGHLAGRPESSSALQAAPC), are a transit peptide targeting the peroxisome. Positions 11–36 (MHRLQVVLGHLAGRPESSSALQAAPC) are PTS2-type peroxisomal targeting signal. C133 acts as the Acyl-thioester intermediate in catalysis. Residues K183 and K244 each carry the N6-acetyllysine modification. Active-site proton acceptor residues include H387 and C418.

It belongs to the thiolase-like superfamily. Thiolase family. Homodimer. Interacts (via PTS2-type peroxisomal targeting signal region) with PEX7; leading to its translocation into peroxisomes.

It is found in the peroxisome. It catalyses the reaction an acyl-CoA + acetyl-CoA = a 3-oxoacyl-CoA + CoA. The catalysed reaction is 2 acetyl-CoA = acetoacetyl-CoA + CoA. It carries out the reaction tetradecanoyl-CoA + acetyl-CoA = 3-oxohexadecanoyl-CoA + CoA. The enzyme catalyses hexanoyl-CoA + acetyl-CoA = 3-oxooctanoyl-CoA + CoA. It catalyses the reaction 3-oxohexadecanedioyl-CoA + CoA = tetradecanedioyl-CoA + acetyl-CoA. The catalysed reaction is 3-oxo-(6Z,9Z,12Z,15Z,18Z,21Z)-tetracosahexaenoyl-CoA + CoA = (4Z,7Z,10Z,13Z,16Z,19Z)-docosahexaenoyl-CoA + acetyl-CoA. It participates in lipid metabolism; peroxisomal fatty acid beta-oxidation. Responsible for the thiolytic cleavage of straight chain 3-keto fatty acyl-CoAs (3-oxoacyl-CoAs). Plays an important role in fatty acid peroxisomal beta-oxidation. Catalyzes the cleavage of short, medium, long, and very long straight chain 3-oxoacyl-CoAs. Medium chain straight 3-oxoacyl-CoAs are preferred substrates. This chain is 3-ketoacyl-CoA thiolase A, peroxisomal, found in Rattus norvegicus (Rat).